The chain runs to 64 residues: Disintegrin VLO5A (64 aa).

The 64-residue stretch at 1-64 folds into the Disintegrin domain; sequence NSGNPCCDPV…SDCPRNPYKD (64 aa). 4 disulfide bridges follow: C6–C29, C20–C26, C25–C50, and C38–C57. The short motif at 42-44 is the Cell attachment site; atypical (VGD) element; sequence VGD.

It belongs to the venom metalloproteinase (M12B) family. P-II subfamily. P-IIe sub-subfamily. In terms of assembly, heterodimer with VLO5B; disulfide-linked. In terms of tissue distribution, expressed by the venom gland.

The protein localises to the secreted. In terms of biological role, poor inhibitor of platelet aggregation. The disintegrin inhibits the adhesion of the alpha-4/beta-1 (ITGA4/ITGB1) integrin to VCAM-1. Inhibition on alpha-IIb/beta-3 (ITGA2B/ITGB3) is low. This chain is Disintegrin VLO5A, found in Macrovipera lebetina obtusa (Levant blunt-nosed viper).